The following is a 424-amino-acid chain: Virion nicking-joining enzyme (424 aa).

PLD phosphodiesterase domains are found at residues 110 to 137 (LGGV…DWRS) and 320 to 346 (YSRV…TGNY).

It belongs to the orthopoxvirus OPG042 family.

It localises to the virion. In terms of biological role, DNA nicking enzyme that cleaves extruded cruciform DNA at its tip. Probably nicks viral hairpins. The polypeptide is Virion nicking-joining enzyme (OPG042) (Homo sapiens (Human)).